Here is a 349-residue protein sequence, read N- to C-terminus: Lipoyl synthase (349 aa).

Positions 55, 60, 66, 81, 85, 88, and 292 each coordinate [4Fe-4S] cluster. One can recognise a Radical SAM core domain in the interval 67–281 (WEDREATFLI…SDAAYELGIK (215 aa)). Positions 321–349 (LDSTTSQEASTLLERYGASEDTPVTASRR) are disordered.

This sequence belongs to the radical SAM superfamily. Lipoyl synthase family. [4Fe-4S] cluster serves as cofactor.

The protein resides in the cytoplasm. It carries out the reaction [[Fe-S] cluster scaffold protein carrying a second [4Fe-4S](2+) cluster] + N(6)-octanoyl-L-lysyl-[protein] + 2 oxidized [2Fe-2S]-[ferredoxin] + 2 S-adenosyl-L-methionine + 4 H(+) = [[Fe-S] cluster scaffold protein] + N(6)-[(R)-dihydrolipoyl]-L-lysyl-[protein] + 4 Fe(3+) + 2 hydrogen sulfide + 2 5'-deoxyadenosine + 2 L-methionine + 2 reduced [2Fe-2S]-[ferredoxin]. It participates in protein modification; protein lipoylation via endogenous pathway; protein N(6)-(lipoyl)lysine from octanoyl-[acyl-carrier-protein]: step 2/2. Functionally, catalyzes the radical-mediated insertion of two sulfur atoms into the C-6 and C-8 positions of the octanoyl moiety bound to the lipoyl domains of lipoate-dependent enzymes, thereby converting the octanoylated domains into lipoylated derivatives. The polypeptide is Lipoyl synthase (Corynebacterium jeikeium (strain K411)).